Here is a 490-residue protein sequence, read N- to C-terminus: GTPase Der (490 aa).

2 consecutive EngA-type G domains span residues 3 to 166 (PVVA…MDDV) and 203 to 376 (IKLA…DSST). GTP is bound by residues 9 to 16 (GRPNVGKS), 56 to 60 (DTGGI), 118 to 121 (NKTD), 209 to 216 (GRPNVGKS), 256 to 260 (DTAGV), and 321 to 324 (NKWD). Positions 377 to 461 (RRVSTAMLTR…PIRIQFKEGE (85 aa)) constitute a KH-like domain.

The protein belongs to the TRAFAC class TrmE-Era-EngA-EngB-Septin-like GTPase superfamily. EngA (Der) GTPase family. In terms of assembly, associates with the 50S ribosomal subunit.

In terms of biological role, GTPase that plays an essential role in the late steps of ribosome biogenesis. This chain is GTPase Der, found in Salmonella choleraesuis (strain SC-B67).